The sequence spans 274 residues: Probable lipoprotein peptidase YaeF (274 aa).

A signal peptide spans 1–20 (MDKPKAYCRLFLPSFLLLSA). Residue Cys21 is the site of N-palmitoyl cysteine attachment. Cys21 is lipidated: S-diacylglycerol cysteine. The active-site Nucleophile is the Cys207. His257 serves as the catalytic Proton acceptor.

The protein localises to the cell inner membrane. This chain is Probable lipoprotein peptidase YaeF (yaeF), found in Escherichia coli (strain K12).